Here is a 546-residue protein sequence, read N- to C-terminus: Protein RDR1 (546 aa).

Residues 20–46 (CVPCRERKRKCNGKSPCEMCVAYGYVC) constitute a DNA-binding region (zn(2)-C6 fungal-type).

The protein resides in the nucleus. Its function is as follows. Transcriptional repressor of multidrug resistance genes, such as PDR5. Required for growth on non-fermentable carbon sources like lactate or glycerol. This chain is Protein RDR1 (RDR1), found in Saccharomyces cerevisiae (strain ATCC 204508 / S288c) (Baker's yeast).